The sequence spans 51 residues: Large ribosomal subunit protein eL40 (51 aa).

Zn(2+) is bound by residues Cys-17, Cys-20, Cys-31, and Cys-34.

It belongs to the eukaryotic ribosomal protein eL40 family. Part of the 50S ribosomal subunit. The cofactor is Zn(2+).

The polypeptide is Large ribosomal subunit protein eL40 (Thermococcus kodakarensis (strain ATCC BAA-918 / JCM 12380 / KOD1) (Pyrococcus kodakaraensis (strain KOD1))).